The primary structure comprises 346 residues: Probable alpha-1,2-galactosyltransferase gmh2 (346 aa).

At 1–11 the chain is on the cytoplasmic side; it reads MALMLSRIPRR. A helical; Signal-anchor for type II membrane protein transmembrane segment spans residues 12 to 32; that stretch reads FFFLFLTVGLIAGAFLYSLIY. Residues 33-346 are Lumenal-facing; that stretch reads FVDVDLVSKV…LWQKFYALID (314 aa). N-linked (GlcNAc...) asparagine glycosylation is found at N64, N142, and N224.

Belongs to the glycosyltransferase 34 family.

The protein localises to the golgi apparatus membrane. This Schizosaccharomyces pombe (strain 972 / ATCC 24843) (Fission yeast) protein is Probable alpha-1,2-galactosyltransferase gmh2 (gmh2).